The chain runs to 638 residues: NBPF family member NBPF6 (638 aa).

2 coiled-coil regions span residues 10–43 (SERA…EKFL) and 69–115 (DSVL…KLRE). The segment at 157–285 (HLVHKLSPEN…VPPRHHDKSN (129 aa)) is disordered. Acidic residues predominate over residues 165–179 (ENDEDEDEDEDDKDE). Residues 174–261 (EDDKDEEVEK…EEEEALNIPP (88 aa)) form the Olduvai 1 domain. The segment covering 192–202 (EVQKTEEKEVP) has biased composition (basic and acidic residues). Low complexity predominate over residues 214–226 (SNSHNPSNSNQPH). Composition is skewed to basic and acidic residues over residues 232-251 (TFKE…HPHD) and 264-273 (QNDHEEEEGK). Olduvai domains lie at 326 to 399 (EKQS…ALVD) and 400 to 503 (KIKK…SQAQ). The interval 563-584 (MKNPPQLEDDALEGSASNTQGR) is disordered.

It belongs to the NBPF family.

Its subcellular location is the cytoplasm. This is NBPF family member NBPF6 from Homo sapiens (Human).